Consider the following 336-residue polypeptide: HTH-type transcriptional repressor PurR (336 aa).

One can recognise an HTH lacI-type domain in the interval 2-56; it reads ATIKDVAKLAGVSTTTVSHVINKTRFVAEDTSKAVWDAIQQLNYSPSAVARSLKV. The H-T-H motif DNA-binding region spans 4 to 23; it reads IKDVAKLAGVSTTTVSHVIN. The DNA-binding element occupies 48 to 56; it reads SAVARSLKV. Hypoxanthine-binding residues include tyrosine 73, lysine 188, phenylalanine 219, and aspartate 273.

As to quaternary structure, homodimer.

It functions in the pathway purine metabolism; purine nucleotide biosynthesis [regulation]. Functionally, is the main repressor of the genes involved in the de novo synthesis of purine nucleotides, regulating purB, purC, purEK, purF, purHD, purL, purMN and guaBA expression. PurR is allosterically activated to bind its cognate DNA by binding the purine corepressors, hypoxanthine or guanine, thereby effecting transcription repression. This chain is HTH-type transcriptional repressor PurR, found in Actinobacillus pleuropneumoniae serotype 3 (strain JL03).